Consider the following 524-residue polypeptide: Hydroxysteroid dehydrogenase-like protein 2 (524 aa).

NADP(+)-binding positions include 17 to 23 (GASRGIG), lysine 42, and aspartate 74. An N6-(2-hydroxyisobutyryl)lysine modification is found at lysine 42. Position 116 is an N6-acetyllysine (lysine 116). Tyrosine 168 (proton acceptor) is an active-site residue. Lysine 172 is a binding site for NADP(+). The span at 283–300 (EEKESYDPVPEVKEEKLQ) shows a compositional bias: basic and acidic residues. Residues 283–410 (EEKESYDPVP…PLLQSVLPPK (128 aa)) are disordered. Positions 301 to 391 (LQEQPQLQEQ…QQQPQQRPQQ (91 aa)) are enriched in low complexity. In terms of domain architecture, SCP2 spans 414-521 (GAVEETFRIV…KLEKLMTHMN (108 aa)). Lysine 424 carries the N6-succinyllysine modification.

This sequence belongs to the short-chain dehydrogenases/reductases (SDR) family.

It localises to the peroxisome. It is found in the mitochondrion. In terms of biological role, has apparently no steroid dehydrogenase activity. Controls bile acid (BA) and lipid metabolism in response to nutritional cues. The sequence is that of Hydroxysteroid dehydrogenase-like protein 2 (Hsdl2) from Rattus norvegicus (Rat).